Here is a 404-residue protein sequence, read N- to C-terminus: Cysteine desulfurase IscS (404 aa).

Pyridoxal 5'-phosphate is bound by residues 75 to 76, Asn-155, Gln-183, and 203 to 205; these read AT and SAH. Lys-206 carries the N6-(pyridoxal phosphate)lysine modification. Thr-243 provides a ligand contact to pyridoxal 5'-phosphate. Cys-328 functions as the Cysteine persulfide intermediate in the catalytic mechanism. Position 328 (Cys-328) interacts with [2Fe-2S] cluster.

Belongs to the class-V pyridoxal-phosphate-dependent aminotransferase family. NifS/IscS subfamily. As to quaternary structure, homodimer. Forms a heterotetramer with IscU, interacts with other sulfur acceptors. Requires pyridoxal 5'-phosphate as cofactor.

It localises to the cytoplasm. The catalysed reaction is (sulfur carrier)-H + L-cysteine = (sulfur carrier)-SH + L-alanine. Its pathway is cofactor biosynthesis; iron-sulfur cluster biosynthesis. Functionally, master enzyme that delivers sulfur to a number of partners involved in Fe-S cluster assembly, tRNA modification or cofactor biosynthesis. Catalyzes the removal of elemental sulfur atoms from cysteine to produce alanine. Functions as a sulfur delivery protein for Fe-S cluster synthesis onto IscU, an Fe-S scaffold assembly protein, as well as other S acceptor proteins. The protein is Cysteine desulfurase IscS of Pseudomonas fluorescens (strain SBW25).